Consider the following 386-residue polypeptide: Succinate--CoA ligase [ADP-forming] subunit beta (386 aa).

An ATP-grasp domain is found at 9 to 244; that stretch reads KDLLTAYQLP…PSQENIRDVL (236 aa). ATP contacts are provided by residues Lys46, 53 to 55, Val102, and Glu107; that span reads GRG. Positions 199 and 213 each coordinate Mg(2+). Substrate is bound by residues Asn264 and 321–323; that span reads GIM.

This sequence belongs to the succinate/malate CoA ligase beta subunit family. Heterotetramer of two alpha and two beta subunits. Mg(2+) serves as cofactor.

The catalysed reaction is succinate + ATP + CoA = succinyl-CoA + ADP + phosphate. It carries out the reaction GTP + succinate + CoA = succinyl-CoA + GDP + phosphate. It functions in the pathway carbohydrate metabolism; tricarboxylic acid cycle; succinate from succinyl-CoA (ligase route): step 1/1. Functionally, succinyl-CoA synthetase functions in the citric acid cycle (TCA), coupling the hydrolysis of succinyl-CoA to the synthesis of either ATP or GTP and thus represents the only step of substrate-level phosphorylation in the TCA. The beta subunit provides nucleotide specificity of the enzyme and binds the substrate succinate, while the binding sites for coenzyme A and phosphate are found in the alpha subunit. The chain is Succinate--CoA ligase [ADP-forming] subunit beta from Chlamydia trachomatis serovar A (strain ATCC VR-571B / DSM 19440 / HAR-13).